A 124-amino-acid chain; its full sequence is UPF0102 protein HCH_05895 (124 aa).

This sequence belongs to the UPF0102 family.

The polypeptide is UPF0102 protein HCH_05895 (Hahella chejuensis (strain KCTC 2396)).